The primary structure comprises 329 residues: MQFIDQARIMVYAGRGGDGIVAFRREKYVPAGGPSGGDGGRGGNVIFEADSNLQTLLDFKYKRIFYAEDGNRGGPNRCSGVSGSNLVIKVPCGTEVRHLGSGILLGDLTEPSQQLMIAFGGRGGLGNAHYLSNRNRVPEKFTLGREGEEWPLQLELKLLAEVGIIGLPNAGKSTLIGNLSAAKPKIADYPFTTLIPNLGAVYRPNGDSIIFADIPGLILGAANGAGLGYDFLRHIERTRLLVHLIDSSAKDLVHDLIVVEGELIAYGHGLADRPRIVVLSKIELLSGEELHQFSQALRMVSGCKILVISSAILSSIEFLKTQIWQQLGT.

The Obg domain occupies 1–159 (MQFIDQARIM…WPLQLELKLL (159 aa)). The region spanning 160 to 328 (AEVGIIGLPN…LKTQIWQQLG (169 aa)) is the OBG-type G domain. GTP contacts are provided by residues 166–173 (GLPNAGKS), 191–195 (FTTLI), 213–216 (DIPG), 280–283 (SKIE), and 309–311 (SSA). Mg(2+) contacts are provided by Ser173 and Thr193.

The protein belongs to the TRAFAC class OBG-HflX-like GTPase superfamily. OBG GTPase family. Monomer. It depends on Mg(2+) as a cofactor.

Its subcellular location is the plastid. It localises to the organellar chromatophore. An essential GTPase which binds GTP, GDP and possibly (p)ppGpp with moderate affinity, with high nucleotide exchange rates and a fairly low GTP hydrolysis rate. The protein is Putative GTPase Obg of Paulinella chromatophora.